Reading from the N-terminus, the 686-residue chain is ATP-dependent zinc metalloprotease FtsH 2 (686 aa).

Topologically, residues 1–11 are cytoplasmic; that stretch reads MKKNIKDIFKN. Residues 12-32 form a helical membrane-spanning segment; it reads FNIFWFCFIFLLLSLLYCLIM. Over 33–178 the chain is Extracellular; it reads MEISHQHDNN…LQRIPYQPYF (146 aa). Residues 179-199 form a helical membrane-spanning segment; that stretch reads GFAPFISAVNICILIIIFYFI. The Cytoplasmic segment spans residues 200–686; it reads YNSIEKTSAQ…QKSEKEDCNK (487 aa). Residue 272–279 participates in ATP binding; the sequence is GPPGVGKT. His493 lines the Zn(2+) pocket. Glu494 is an active-site residue. Residues His497 and Asp569 each contribute to the Zn(2+) site.

It in the central section; belongs to the AAA ATPase family. The protein in the C-terminal section; belongs to the peptidase M41 family. Homohexamer. Zn(2+) serves as cofactor.

Its subcellular location is the cell membrane. In terms of biological role, acts as a processive, ATP-dependent zinc metallopeptidase for both cytoplasmic and membrane proteins. Plays a role in the quality control of integral membrane proteins. The chain is ATP-dependent zinc metalloprotease FtsH 2 from Phytoplasma mali (strain AT).